The following is a 121-amino-acid chain: Large ribosomal subunit protein uL18 (121 aa).

Belongs to the universal ribosomal protein uL18 family. In terms of assembly, part of the 50S ribosomal subunit; part of the 5S rRNA/L5/L18/L25 subcomplex. Contacts the 5S and 23S rRNAs.

Its function is as follows. This is one of the proteins that bind and probably mediate the attachment of the 5S RNA into the large ribosomal subunit, where it forms part of the central protuberance. This is Large ribosomal subunit protein uL18 from Roseiflexus castenholzii (strain DSM 13941 / HLO8).